The following is a 305-amino-acid chain: Ribosomal RNA small subunit methyltransferase H (305 aa).

Residues 49-51 (GGH), aspartate 68, phenylalanine 100, aspartate 116, and glutamine 123 each bind S-adenosyl-L-methionine.

It belongs to the methyltransferase superfamily. RsmH family.

The protein localises to the cytoplasm. It catalyses the reaction cytidine(1402) in 16S rRNA + S-adenosyl-L-methionine = N(4)-methylcytidine(1402) in 16S rRNA + S-adenosyl-L-homocysteine + H(+). Functionally, specifically methylates the N4 position of cytidine in position 1402 (C1402) of 16S rRNA. The chain is Ribosomal RNA small subunit methyltransferase H from Synechocystis sp. (strain ATCC 27184 / PCC 6803 / Kazusa).